Reading from the N-terminus, the 235-residue chain is Methylosome subunit pICln (235 aa).

The segment at 1–21 (MSFLKSFPPPGSAEGLRQQQP) is disordered. The residue at position 2 (Ser2) is an N-acetylserine. Residues Ser100, Ser142, Ser191, Ser193, Ser196, and Ser208 each carry the phosphoserine modification. Residues 133–157 (LHPDPEDEDSDDYDGEEYDVEAHEQ) are disordered. A compositionally biased stretch (acidic residues) spans 137–151 (PEDEDSDDYDGEEYD). The segment at 195 to 217 (SSQYNMAGVRTEDSTRDYEDGME) is disordered. Over residues 204–213 (RTEDSTRDYE) the composition is skewed to basic and acidic residues. Thr221 carries the post-translational modification Phosphothreonine.

Belongs to the pICln (TC 1.A.47) family. In terms of assembly, component of the methylosome, a 20S complex containing at least PRMT5/SKB1, WDR77/MEP50 and CLNS1A/pICln. May mediate SNRPD1 and SNRPD3 methylation. Forms a 6S pICln-Sm complex composed of CLNS1A/pICln, SNRPD1, SNRPD2, SNRPE, SNRPF and SNRPG; ring-like structure where CLNS1A/pICln mimics additional Sm proteins and which is unable to assemble into the core snRNP. Interacts with LSM10 and LSM11.

The protein resides in the cytoplasm. Its subcellular location is the cytosol. It localises to the nucleus. It is found in the cytoskeleton. Functionally, involved in both the assembly of spliceosomal snRNPs and the methylation of Sm proteins. Chaperone that regulates the assembly of spliceosomal U1, U2, U4 and U5 small nuclear ribonucleoproteins (snRNPs), the building blocks of the spliceosome, and thereby plays an important role in the splicing of cellular pre-mRNAs. Most spliceosomal snRNPs contain a common set of Sm proteins SNRPB, SNRPD1, SNRPD2, SNRPD3, SNRPE, SNRPF and SNRPG that assemble in a heptameric protein ring on the Sm site of the small nuclear RNA to form the core snRNP (Sm core). In the cytosol, the Sm proteins SNRPD1, SNRPD2, SNRPE, SNRPF and SNRPG are trapped in an inactive 6S pICln-Sm complex by the chaperone CLNS1A that controls the assembly of the core snRNP. Dissociation by the SMN complex of CLNS1A from the trapped Sm proteins and their transfer to an SMN-Sm complex triggers the assembly of core snRNPs and their transport to the nucleus. The sequence is that of Methylosome subunit pICln (CLNS1A) from Canis lupus familiaris (Dog).